A 195-amino-acid chain; its full sequence is FMN-dependent NADH:quinone oxidoreductase (195 aa).

FMN contacts are provided by residues serine 10, 16-18 (SVS), and 88-91 (MYNF).

The protein belongs to the azoreductase type 1 family. In terms of assembly, homodimer. Requires FMN as cofactor.

It catalyses the reaction 2 a quinone + NADH + H(+) = 2 a 1,4-benzosemiquinone + NAD(+). The enzyme catalyses N,N-dimethyl-1,4-phenylenediamine + anthranilate + 2 NAD(+) = 2-(4-dimethylaminophenyl)diazenylbenzoate + 2 NADH + 2 H(+). Functionally, quinone reductase that provides resistance to thiol-specific stress caused by electrophilic quinones. In terms of biological role, also exhibits azoreductase activity. Catalyzes the reductive cleavage of the azo bond in aromatic azo compounds to the corresponding amines. The chain is FMN-dependent NADH:quinone oxidoreductase from Francisella philomiragia subsp. philomiragia (strain ATCC 25017 / CCUG 19701 / FSC 153 / O#319-036).